The chain runs to 422 residues: Carboxypeptidase B2 (422 aa).

A signal peptide spans 1–21 (MKLHGLGILVAIILYEQHGFA). A propeptide spans 22-113 (FQSGQVLSAL…QTFNDTVSPR (92 aa)) (activation peptide). Asn-43, Asn-72, Asn-84, and Asn-107 each carry an N-linked (GlcNAc...) asparagine glycan. In terms of domain architecture, Peptidase M14 spans 121–418 (QYHSLNEIYS…AAISKIVWHV (298 aa)). Cysteines 177 and 190 form a disulfide. The Zn(2+) site is built by His-180 and Glu-183. Residues 180–183 (HARE) and Arg-238 each bind substrate. An N-linked (GlcNAc...) asparagine glycan is attached at Asn-240. Cystine bridges form between Cys-249–Cys-273 and Cys-264–Cys-278. Position 255 to 256 (255 to 256 (NR)) interacts with substrate. His-309 contacts Zn(2+). Substrate is bound at residue 310 to 311 (SY). N-linked (GlcNAc...) asparagine glycosylation occurs at Asn-322. Tyr-362 provides a ligand contact to substrate. Glu-384 functions as the Proton donor/acceptor in the catalytic mechanism.

It belongs to the peptidase M14 family. Requires Zn(2+) as cofactor. In terms of tissue distribution, plasma; synthesized in the liver.

It localises to the secreted. The enzyme catalyses Release of C-terminal Arg and Lys from a polypeptide.. TAFI/CPB2 is unique among carboxypeptidases in that it spontaneously inactivates with a short half-life, a property that is crucial for its role in controlling blood clot lysis. The zymogen is stabilized by interactions with the activation peptide. Release of the activation peptide increases a dynamic flap mobility and in time this leads to conformational changes that disrupt the catalytic site and expose a cryptic thrombin-cleavage site present at Arg-323. Cleaves C-terminal arginine or lysine residues from biologically active peptides such as kinins or anaphylatoxins in the circulation thereby regulating their activities. Down-regulates fibrinolysis by removing C-terminal lysine residues from fibrin that has already been partially degraded by plasmin. The sequence is that of Carboxypeptidase B2 (Cpb2) from Mus musculus (Mouse).